The primary structure comprises 353 residues: (-)-beta-caryophyllene synthase ((2E,6E)-farnesyl diphosphate cyclizing) (353 aa).

Mg(2+) is bound by residues aspartate 85 and aspartate 89. The short motif at aspartate 85–aspartate 89 is the DDXXD motif element. Position 179 (arginine 179) interacts with substrate. Residues asparagine 225 and serine 229 each coordinate Mg(2+). Lysine 232 is a binding site for substrate. A Mg(2+)-binding site is contributed by glutamate 233. Arginine 320 to phenylalanine 321 is a binding site for substrate.

This sequence belongs to the terpene synthase family. Requires Mg(2+) as cofactor.

The catalysed reaction is (2E,6E)-farnesyl diphosphate = (-)-(E)-beta-caryophyllene + diphosphate. Its pathway is secondary metabolite biosynthesis; terpenoid biosynthesis. Functionally, catalyzes the conversion of (2E,6E)-farnesyl diphosphate (FPP) to yield the bicyclic sesquiterpene (2S,10R)-(-)-(E)-beta-caryophyllene via a probable 1,10-cyclization, which could involve the abstraction of the pyrophosphate from FPP to yield a (E,E)-germacradienyl cation. The chain is (-)-beta-caryophyllene synthase ((2E,6E)-farnesyl diphosphate cyclizing) (ptlA) from Saccharothrix espanaensis (strain ATCC 51144 / DSM 44229 / JCM 9112 / NBRC 15066 / NRRL 15764).